Consider the following 432-residue polypeptide: Serine--tRNA ligase (432 aa).

L-serine is bound at residue 230–232 (TAE). 261 to 263 (RSE) is a binding site for ATP. An L-serine-binding site is contributed by Glu284. An ATP-binding site is contributed by 348–351 (EVSS). Ser383 is a binding site for L-serine.

The protein belongs to the class-II aminoacyl-tRNA synthetase family. Type-1 seryl-tRNA synthetase subfamily. In terms of assembly, homodimer. The tRNA molecule binds across the dimer.

It is found in the cytoplasm. It carries out the reaction tRNA(Ser) + L-serine + ATP = L-seryl-tRNA(Ser) + AMP + diphosphate + H(+). The enzyme catalyses tRNA(Sec) + L-serine + ATP = L-seryl-tRNA(Sec) + AMP + diphosphate + H(+). Its pathway is aminoacyl-tRNA biosynthesis; selenocysteinyl-tRNA(Sec) biosynthesis; L-seryl-tRNA(Sec) from L-serine and tRNA(Sec): step 1/1. Its function is as follows. Catalyzes the attachment of serine to tRNA(Ser). Is also able to aminoacylate tRNA(Sec) with serine, to form the misacylated tRNA L-seryl-tRNA(Sec), which will be further converted into selenocysteinyl-tRNA(Sec). The sequence is that of Serine--tRNA ligase from Limosilactobacillus fermentum (strain NBRC 3956 / LMG 18251) (Lactobacillus fermentum).